Here is a 96-residue protein sequence, read N- to C-terminus: MPAIEIGRICVKTAGREAGRKCIIVDIIDDNFVLVTGPKSLTGVKRRKVNIKHLEPTDKSIKIPRGASDEEVLKAIGENGLTDYMVEHVKPKLTPI.

It belongs to the eukaryotic ribosomal protein eL14 family.

This is Large ribosomal subunit protein eL14 from Desulfurococcus amylolyticus (strain DSM 18924 / JCM 16383 / VKM B-2413 / 1221n) (Desulfurococcus kamchatkensis).